The following is a 315-amino-acid chain: tRNA dimethylallyltransferase (315 aa).

13-20 lines the ATP pocket; the sequence is GPTASGKS. 15–20 is a substrate binding site; sequence TASGKS. 2 interaction with substrate tRNA regions span residues 38-41 and 162-166; these read DSMQ and QRLAR.

The protein belongs to the IPP transferase family. As to quaternary structure, monomer. It depends on Mg(2+) as a cofactor.

The catalysed reaction is adenosine(37) in tRNA + dimethylallyl diphosphate = N(6)-dimethylallyladenosine(37) in tRNA + diphosphate. Catalyzes the transfer of a dimethylallyl group onto the adenine at position 37 in tRNAs that read codons beginning with uridine, leading to the formation of N6-(dimethylallyl)adenosine (i(6)A). In Paramagnetospirillum magneticum (strain ATCC 700264 / AMB-1) (Magnetospirillum magneticum), this protein is tRNA dimethylallyltransferase.